A 442-amino-acid polypeptide reads, in one-letter code: Ribosomal protein uS12 methylthiotransferase RimO (442 aa).

The region spanning 8 to 118 (PKVGFVSLGC…VLGHVHKYVA (111 aa)) is the MTTase N-terminal domain. [4Fe-4S] cluster contacts are provided by cysteine 17, cysteine 53, cysteine 82, cysteine 150, cysteine 154, and cysteine 157. In terms of domain architecture, Radical SAM core spans 136 to 373 (LTPRHYAYLK…MELQQQVSIR (238 aa)). Residues 376–442 (ARKVGKEMTV…EYDLWASLIG (67 aa)) form the TRAM domain.

The protein belongs to the methylthiotransferase family. RimO subfamily. Requires [4Fe-4S] cluster as cofactor.

It is found in the cytoplasm. The catalysed reaction is L-aspartate(89)-[ribosomal protein uS12]-hydrogen + (sulfur carrier)-SH + AH2 + 2 S-adenosyl-L-methionine = 3-methylsulfanyl-L-aspartate(89)-[ribosomal protein uS12]-hydrogen + (sulfur carrier)-H + 5'-deoxyadenosine + L-methionine + A + S-adenosyl-L-homocysteine + 2 H(+). Its function is as follows. Catalyzes the methylthiolation of an aspartic acid residue of ribosomal protein uS12. The sequence is that of Ribosomal protein uS12 methylthiotransferase RimO from Aeromonas salmonicida (strain A449).